Consider the following 1705-residue polypeptide: Receptor-type tyrosine-protein phosphatase V (1705 aa).

Positions 1-18 are cleaved as a signal peptide; that stretch reads MRPLILLAALLWLQDSLA. At 19–1077 the chain is on the extracellular side; sequence QEDVCSSLDG…QASISLVAMP (1059 aa). The tract at residues 24 to 44 is disordered; that stretch reads SSLDGSPDRQGGGPPLSVSVT. Fibronectin type-III domains follow at residues 37–129, 130–222, 218–305, 306–388, 393–454, 475–569, 565–654, 655–749, 744–831, and 832–926; these read PPLS…TAPT, VVRG…VPPD, PVPP…EWTY, PSYP…SIWL, ARPM…HYRV, PPQS…APPT, PAPP…TGWT, PPSA…TPNE, PLTP…VLSV, and EPGP…SAEV. Residues N74, N89, N117, N174, N239, N259, N299, N345, N431, N551, N570, N620, N649, N663, and N737 are each glycosylated (N-linked (GlcNAc...) asparagine). N-linked (GlcNAc...) asparagine glycans are attached at residues N851, N882, N970, and N982. The chain crosses the membrane as a helical span at residues 1078 to 1100; it reads LTVMMGTVVGCIIIVCAVLCLLC. The Cytoplasmic segment spans residues 1101 to 1705; sequence RRGLKGPRSE…LRNRLPRARK (605 aa). Tyrosine-protein phosphatase domains follow at residues 1150 to 1409 and 1427 to 1695; these read FFQE…LLNK and NFAQ…LNSA. Substrate-binding positions include D1316, 1350–1356, and Q1394; that span reads CSAGVGR. Catalysis depends on C1350, which acts as the Phosphocysteine intermediate.

Belongs to the protein-tyrosine phosphatase family. Receptor class 3 subfamily.

The protein resides in the membrane. It carries out the reaction O-phospho-L-tyrosyl-[protein] + H2O = L-tyrosyl-[protein] + phosphate. Functionally, protein tyrosine phosphatase that acts as a regulator of energy metabolism by mediating dephosphorylation of insulin receptor (Insr). Prevents decarboxylation of osteocalcin (Bglap and Bglap2) via an indirect mechanism: dephosphorylation of insulin receptor prevents insulin signaling-dependent decarboxylation of osteocalcin, preventing the hormone activity of osteocalcin. May play a role in the maintenance of pluripotency. The protein is Receptor-type tyrosine-protein phosphatase V (Ptprv) of Mus musculus (Mouse).